The primary structure comprises 538 residues: Calcium-dependent protein kinase 8 (538 aa).

Positions 1-26 are disordered; the sequence is MGNCCGTPATAEEGGKRRRRGKQKKA. Gly-2 carries N-myristoyl glycine lipidation. Positions 16-25 are enriched in basic residues; that stretch reads KRRRRGKQKK. A Protein kinase domain is found at 64-322; sequence YELGGELGRG…AEQVLEHPWL (259 aa). ATP contacts are provided by residues 70-78 and Lys-93; that span reads LGRGEFGIT. The Proton acceptor role is filled by Asp-188. An autoinhibitory domain region spans residues 328–358; that stretch reads MPDIPLGDAVRARLQQFAAMNKLKKKALKVI. EF-hand domains are found at residues 365–400, 401–436, 437–472, and 473–508; these read EEAA…LGNQ, MPDS…VRKI, GNDE…EIDG, and NDED…GTDW. Ca(2+) is bound by residues Asp-378, Ser-380, Asn-382, Gln-384, Asp-389, Asp-414, Asp-416, Asn-418, Glu-425, Asp-450, Asn-452, Ser-454, Tyr-456, Glu-461, Asp-486, Asp-488, Asp-490, Lys-492, and Glu-497.

It belongs to the protein kinase superfamily. Ser/Thr protein kinase family. CDPK subfamily.

Its subcellular location is the membrane. The catalysed reaction is L-seryl-[protein] + ATP = O-phospho-L-seryl-[protein] + ADP + H(+). It carries out the reaction L-threonyl-[protein] + ATP = O-phospho-L-threonyl-[protein] + ADP + H(+). Its activity is regulated as follows. Activated by calcium. Autophosphorylation may play an important role in the regulation of the kinase activity. May play a role in signal transduction pathways that involve calcium as a second messenger. The sequence is that of Calcium-dependent protein kinase 8 from Oryza sativa subsp. japonica (Rice).